Here is an 80-residue protein sequence, read N- to C-terminus: uncharacterized protein (80 aa).

4Fe-4S ferredoxin-type domains lie at 21–49 (KIIE…AIKN) and 50–80 (NRVV…LYDA). Residues Cys-30, Cys-33, Cys-36, Cys-40, Cys-60, Cys-63, Cys-66, and Cys-70 each coordinate [4Fe-4S] cluster.

It depends on [4Fe-4S] cluster as a cofactor.

This is an uncharacterized protein from Methanocaldococcus jannaschii (strain ATCC 43067 / DSM 2661 / JAL-1 / JCM 10045 / NBRC 100440) (Methanococcus jannaschii).